Here is a 59-residue protein sequence, read N- to C-terminus: Venom protein 27.7 (59 aa).

The N-terminal stretch at 1-29 (MTFITLTIGLSLRTIFLIFIFLPPPHLLA) is a signal peptide.

It belongs to the non-disulfide-bridged peptide (NDBP) superfamily. In terms of tissue distribution, expressed by the venom gland.

Its subcellular location is the secreted. The chain is Venom protein 27.7 from Lychas mucronatus (Chinese swimming scorpion).